Here is a 613-residue protein sequence, read N- to C-terminus: Dihydroxy-acid dehydratase (613 aa).

Position 81 (Asp-81) interacts with Mg(2+). Cys-122 is a binding site for [2Fe-2S] cluster. Residues Asp-123 and Lys-124 each contribute to the Mg(2+) site. An N6-carboxylysine modification is found at Lys-124. Cys-193 provides a ligand contact to [2Fe-2S] cluster. A Mg(2+)-binding site is contributed by Glu-489. Residue Ser-515 is the Proton acceptor of the active site.

This sequence belongs to the IlvD/Edd family. Homodimer. [2Fe-2S] cluster serves as cofactor. Requires Mg(2+) as cofactor.

The catalysed reaction is (2R)-2,3-dihydroxy-3-methylbutanoate = 3-methyl-2-oxobutanoate + H2O. It catalyses the reaction (2R,3R)-2,3-dihydroxy-3-methylpentanoate = (S)-3-methyl-2-oxopentanoate + H2O. It participates in amino-acid biosynthesis; L-isoleucine biosynthesis; L-isoleucine from 2-oxobutanoate: step 3/4. It functions in the pathway amino-acid biosynthesis; L-valine biosynthesis; L-valine from pyruvate: step 3/4. Functions in the biosynthesis of branched-chain amino acids. Catalyzes the dehydration of (2R,3R)-2,3-dihydroxy-3-methylpentanoate (2,3-dihydroxy-3-methylvalerate) into 2-oxo-3-methylpentanoate (2-oxo-3-methylvalerate) and of (2R)-2,3-dihydroxy-3-methylbutanoate (2,3-dihydroxyisovalerate) into 2-oxo-3-methylbutanoate (2-oxoisovalerate), the penultimate precursor to L-isoleucine and L-valine, respectively. The polypeptide is Dihydroxy-acid dehydratase (Pseudomonas putida (strain GB-1)).